The sequence spans 243 residues: Peptide deformylase, mitochondrial (243 aa).

The N-terminal 39 residues, 1–39 (MARLWGALSLWPLWAAVPWGGAAAVGVRACSSTAAPDGV), are a transit peptide targeting the mitochondrion. Substrate contacts are provided by Gly71, Pro169, and Gly171. Positions 165–175 (LVTFPEGCESV) are hydrophobic dimerization interface. Co(2+) is bound by residues Cys172 and His214. Residue Glu215 is part of the active site. Position 218 (His218) interacts with Co(2+).

It belongs to the polypeptide deformylase family. Homodimer. Co(2+) serves as cofactor. Ubiquitous.

The protein localises to the mitochondrion. The enzyme catalyses N-terminal N-formyl-L-methionyl-[peptide] + H2O = N-terminal L-methionyl-[peptide] + formate. Removes the formyl group from the N-terminal Met of newly synthesized proteins. This is Peptide deformylase, mitochondrial from Homo sapiens (Human).